The following is a 214-amino-acid chain: Acetoin utilization protein AcuB (214 aa).

CBS domains follow at residues 7–66 (MKRD…ENKR) and 78–135 (MKKD…GADQ).

Interacts with YabA.

Its pathway is ketone degradation; acetoin degradation. Its function is as follows. Role in growth and sporulation on acetoin or butanediol. Involved in the breakdown of these compounds used as a carbon source. The polypeptide is Acetoin utilization protein AcuB (acuB) (Bacillus subtilis (strain 168)).